The primary structure comprises 61 residues: Disintegrin atroxatin (61 aa).

The Disintegrin domain occupies 1–61; the sequence is NPCCDAATCK…ADCPRKGIYG (61 aa). Disulfide bonds link C3/C26, C9/C23, C17/C23, C22/C47, and C35/C54. The Cell attachment site signature appears at 39 to 41; sequence RGD.

It belongs to the venom metalloproteinase (M12B) family. P-II subfamily. P-IIa sub-subfamily. As to quaternary structure, monomer (disintegrin). Expressed by the venom gland.

Its subcellular location is the secreted. In terms of biological role, inhibits fibrinogen interaction with platelets. Acts by binding to alpha-IIb/beta-3 (ITGA2B/ITGB3) on the platelet surface and inhibits aggregation induced by ADP, thrombin, platelet-activating factor and collagen. The polypeptide is Disintegrin atroxatin (Crotalus atrox (Western diamondback rattlesnake)).